A 107-amino-acid chain; its full sequence is U1-lycotoxin-Ls1h (107 aa).

A signal peptide spans 1 to 20 (MMKVLVVVALLVTLISYSSS). Positions 21-41 (EGIDDLEADELLSLMANEQTR) are excised as a propeptide. Disulfide bonds link Cys-44/Cys-59, Cys-51/Cys-68, and Cys-70/Cys-84.

Belongs to the neurotoxin 19 (CSTX) family. 04 (U1-Lctx) subfamily. Expressed by the venom gland.

The protein resides in the secreted. This is U1-lycotoxin-Ls1h from Lycosa singoriensis (Wolf spider).